A 390-amino-acid polypeptide reads, in one-letter code: Immunoglobulin mu Fc receptor (390 aa).

The first 16 residues, Met1–Ala16, serve as a signal peptide directing secretion. The Extracellular segment spans residues Leu17–Gly251. An Ig-like domain is found at Val23 to His123. The interval Val33–Thr115 is CDR4. Intrachain disulfides connect Cys37–Cys104 and Cys49–Cys58. A CDR1 region spans residues Pro40 to Arg45. Residues Gly59 to Ala70 are CDR2. Thr92 carries the post-translational modification Phosphothreonine. Residues Ala106–Thr115 are CDR3. Residues Pro166–Phe204 form a disordered region. A helical membrane pass occupies residues Phe252 to Val272. Residues Lys273–Ala390 are Cytoplasmic-facing. Low complexity-rich tracts occupy residues Met293–Gln311 and Ala325–Pro334. A disordered region spans residues Met293 to Gln348. Over residues Val335–Pro346 the composition is skewed to pro residues.

In terms of assembly, interacts (via Ig-like domain) with IGHM (via CH4/Cmu4 domain), both secreted and membrane-bound IgM; the interaction is glycan-independent and multivalent theoretically involving up to eight binding sites for the IgM pentamer. Post-translationally, phosphorylated on both Tyr and Ser residues. In terms of processing, O-glycosylated. Sialylated. O-linked glycans regulate trafficking to the plasma membrane. As to expression, expressed by CD19-positive B cells and CD4-positive and CD8-positive T cell populations in primary and secondary lymphoid tissues (at protein level). Among B cell subsets, detected in a subset of bone marrow pro- and pre-B cells, in most follicular and memory B cells and in a small subset of germinal center B cells (at protein level). Expressed at lower levels in CD56-positive NK cells (at protein level). Expressed in lymph nodes, lung, thymus and kidneys. Very weak expression detected in spleen, liver, heart, and salivary gland.

The protein resides in the cell membrane. It is found in the early endosome membrane. The protein localises to the golgi apparatus. Its subcellular location is the trans-Golgi network membrane. It localises to the lysosome membrane. The protein resides in the secreted. Its function is as follows. High-affinity Fc receptor for immunoglobulin M (IgM), both secreted and membrane-bound IgM. Primarily regulates IgM transport and homeostasis. In lymphoid cells, enables exocytosis of membrane-bound IgM on the plasma membrane as well as endocytosis of IgM-antigen complexes toward lysosomes for degradation. In mucosal epithelium, mediates retrotranscytosis of antigen-IgM complexes across mucosal M cells toward antigen-presenting cells in mucosal lymphoid tissues. Triggers costimulatory signaling and mediates most of IgM effector functions involved in B cell development and primary immune response to infection. Likely limits tonic IgM BCR signaling to self-antigens for proper negative selection of autoreactive B cells in the bone marrow and for the maintenance of regulatory B cell pool in peripheral lymphoid organs. Mediates antibody responses to T cell-dependent and T cell-independent antigens and promotes induction of an efficient neutralizing IgG response. Engages in cross-talk with antigen-receptor signaling via the non-canonical NF-kappa-B, MAP kinases and calcium signaling pathways. The chain is Immunoglobulin mu Fc receptor from Homo sapiens (Human).